A 151-amino-acid chain; its full sequence is Probable cGMP 3',5'-cyclic phosphodiesterase subunit delta (151 aa).

The protein belongs to the PDE6D/unc-119 family. In terms of assembly, interacts with Pde6.

The protein resides in the nucleus. The protein localises to the cytoplasm. This is Probable cGMP 3',5'-cyclic phosphodiesterase subunit delta from Drosophila grimshawi (Hawaiian fruit fly).